A 2124-amino-acid polypeptide reads, in one-letter code: Genome polyprotein (2124 aa).

G2 is lipidated: N-myristoyl glycine; by host. Residues 873 to 880 (VARDLLLI) are host EIF4E binding. One can recognise an SF3 helicase domain in the interval 1102–1264 (VQIATYFRNF…SAATKNGKLD (163 aa)). 1130–1137 (GKPGVGKS) contacts ATP. Positions 1415-1437 (DKPKEEEEEPEEKKEKKTEESKE) are enriched in basic and acidic residues. Residues 1415-1446 (DKPKEEEEEPEEKKEKKTEESKEAAGPYNGPT) form a disordered region. Y1442 carries the O-(5'-phospho-RNA)-tyrosine modification. A Peptidase C3 domain is found at 1459-1648 (SPLMDMEKKI…VGTRLTARMI (190 aa)). Active-site for protease 3C activity residues include H1501, D1535, and C1612. The 119-residue stretch at 1893–2011 (PYLYDFDYSN…ASKFELDLVM (119 aa)) folds into the RdRp catalytic domain. Residues D1899 and D1997 each act as for RdRp activity in the active site.

The protein belongs to the picornaviruses polyprotein family. In terms of assembly, interacts with host EIF4E. Interacts with host IFIH1/MDA5; this interaction inhibits the induction of the IFN-beta signal pathway. Post-translationally, specific enzymatic cleavages by the viral protease in vivo yield a variety of precursors and mature proteins. The polyprotein seems to be cotranslationally cleaved at the 2A/2B junction by a ribosomal skip from one codon to the next without formation of a peptide bond. This process would release the P1-2A peptide from the translational complex. In terms of processing, during virion maturation, immature virions are rendered infectious following cleavage of VP0 into VP4 and VP2. This maturation seems to be an autocatalytic event triggered by the presence of RNA in the capsid and is followed by a conformational change of the particle. Myristoylation is required during RNA encapsidation and formation of the mature virus particle. Post-translationally, uridylylated by the polymerase and is covalently linked to the 5'-end of genomic RNA. This uridylylated form acts as a nucleotide-peptide primer for the polymerase.

It localises to the virion. Its subcellular location is the host cytoplasm. The protein localises to the host nucleus. The protein resides in the host nucleolus. It is found in the host cytoplasmic vesicle membrane. It carries out the reaction RNA(n) + a ribonucleoside 5'-triphosphate = RNA(n+1) + diphosphate. The enzyme catalyses ATP + H2O = ADP + phosphate + H(+). It catalyses the reaction Selective cleavage of Gln-|-Gly bond in the poliovirus polyprotein. In other picornavirus reactions Glu may be substituted for Gln, and Ser or Thr for Gly.. Its function is as follows. Forms an icosahedral capsid of pseudo T=3 symmetry with capsid proteins VP2 and VP3. Together they form an icosahedral capsid composed of 60 copies of each VP1, VP2, and VP3, with a diameter of approximately 300 Angstroms. VP4 lies on the inner surface of the protein shell formed by VP1, VP2 and VP3. All the three latter proteins contain a beta-sheet structure called beta-barrel jelly roll. VP1 is situated at the 12 fivefold axes, whereas VP2 and VP3 are located at the quasi-sixfold axes. In terms of biological role, lies on the inner surface of the capsid shell. After binding to the host receptor, the capsid undergoes conformational changes. Capsid protein VP4 is released, capsid protein VP1 N-terminus is externalized, and together, they shape a pore in the host membrane through which the viral genome is translocated into the host cell cytoplasm. After genome has been released, the channel shrinks. VP0 precursor is a component of immature procapsids. Functionally, involved in host translation shutoff by inhibiting cap-dependent mRNA translation. Nuclear localization is required for this function. The resulting inhibition of cellular protein synthesis serves to ensure maximal viral gene expression and to evade host immune response. Its function is as follows. Affects membrane integrity and causes an increase in membrane permeability. In terms of biological role, associates with and induces structural rearrangements of intracellular membranes. It displays RNA-binding, nucleotide binding and NTPase activities. Interacts with IFIH1/MDA5 to inhibit the induction of the IFN-beta signal pathway. Serves as membrane anchor via its hydrophobic domain. Functionally, forms a primer, VPg-pU, which is utilized by the polymerase for the initiation of RNA chains. Its function is as follows. Cysteine protease that generates mature viral proteins from the precursor polyprotein. In addition to its proteolytic activity, it binds to viral RNA, and thus influences viral genome replication. RNA and substrate cooperatively bind to the protease. Cleaves host PABP1, this cleavage is important for viral replication. Cleaves host TANK and disrupts the TANK-TBK1-IKKepsilon-IRF3 complex, thereby inhibiting the induction of the IFN-beta signal pathway. In terms of biological role, replicates the genomic and antigenomic RNAs by recognizing replications specific signals. Performs VPg uridylylation. This chain is Genome polyprotein, found in Cosavirus A (isolate Human/Pakistan/0553/-) (HCoSV-A).